The sequence spans 510 residues: Probable gamma-aminobutyrate transaminase 3, mitochondrial (510 aa).

Residues 1 to 41 constitute a mitochondrion transit peptide; it reads MICRSLLLLRSNAASKASSIVKHVAATGCLPEYSSEAPARY. A pyridoxal 5'-phosphate-binding site is contributed by 166–167; that stretch reads GS. Tyrosine 199 is a substrate binding site. A pyridoxal 5'-phosphate-binding site is contributed by aspartate 306. Residue lysine 335 coordinates substrate. Lysine 335 is subject to N6-(pyridoxal phosphate)lysine.

It belongs to the class-III pyridoxal-phosphate-dependent aminotransferase family.

Its subcellular location is the mitochondrion. It catalyses the reaction 4-aminobutanoate + pyruvate = succinate semialdehyde + L-alanine. The catalysed reaction is 4-aminobutanoate + glyoxylate = succinate semialdehyde + glycine. In terms of biological role, transaminase that degrades gamma-amino butyric acid (GABA). The protein is Probable gamma-aminobutyrate transaminase 3, mitochondrial of Oryza sativa subsp. indica (Rice).